The sequence spans 1102 residues: Voltage-gated delayed rectifier potassium channel KCNH8 (1102 aa).

The Cytoplasmic portion of the chain corresponds to 1-225; that stretch reads MPVMKGLLAP…HFSTFKAGWD (225 aa). One can recognise a PAS domain in the interval 18-90; the sequence is IATRFDGTHS…LQIEKSLEEK (73 aa). The PAC domain maps to 93–145; that stretch reads FKGEIMFYKKNGAPFWCLLDIVPIKNEKGDVVLFLASFKDITDTKVKITSEDK. Residues 226-246 form a helical membrane-spanning segment; the sequence is WLILLATFYVAVTVPYNVCFI. Topologically, residues 247–255 are extracellular; the sequence is GNEDLSTTR. Residues 256 to 276 form a helical membrane-spanning segment; that stretch reads STTVSDIAVEILFIIDIILNF. Residues 277 to 298 are Cytoplasmic-facing; that stretch reads RTTYVSKSGQVIFEARSICIHY. The chain crosses the membrane as a helical span at residues 299 to 319; the sequence is VTTWFIIDLIAALPFDLLYAF. An N-linked (GlcNAc...) asparagine glycan is attached at Asn320. Over 320–327 the chain is Extracellular; sequence NVTVVSLV. A helical; Voltage-sensor membrane pass occupies residues 328 to 348; it reads HLLKTVRLLRLLRLLQKLDRY. Topologically, residues 349–353 are cytoplasmic; it reads SQHST. A helical transmembrane segment spans residues 354 to 374; it reads IVLTLLMSMFALLAHWMACIW. Topologically, residues 375-419 are extracellular; the sequence is YVIGKMEREDNSLLKWEVGWLHELGKRLESPYYGNNTLGGPSIRS. An N-linked (GlcNAc...) asparagine glycan is attached at Asn409. Positions 420 to 440 form an intramembrane region, pore-forming; it reads AYIAALYFTLSSLTSVGFGNV. Residues 434–439 carry the Selectivity filter motif; that stretch reads SVGFGN. The Extracellular portion of the chain corresponds to 441–448; the sequence is SANTDAEK. Residues 449 to 469 traverse the membrane as a helical segment; sequence IFSICTMLIGALMHALVFGNV. The Cytoplasmic portion of the chain corresponds to 470–1102; it reads TAIIQRMYSR…DVKDSKAINV (633 aa). Positions 551–668 are cNMP-binding domain; it reads LFECASRGCL…HKFVEDIQHD (118 aa). Disordered regions lie at residues 683 to 744, 762 to 793, 818 to 845, and 960 to 983; these read SRLS…KTGS, PFHS…KEKN, EDGN…ISPS, and LVGS…LHHS. Acidic residues predominate over residues 710 to 723; it reads VEDEEEEEVEEEET. The span at 777 to 793 shows a compositional bias: basic and acidic residues; sequence TKQEADPPNHGTRKEKN. Over residues 968–982 the composition is skewed to basic and acidic residues; the sequence is TEAHEQSPVDSELHH.

The protein belongs to the potassium channel family. H (Eag) (TC 1.A.1.20) subfamily. Kv12.1/KCNH8 sub-subfamily. As to quaternary structure, the potassium channel is probably composed of a homo- or heterotetrameric complex of pore-forming alpha subunits that can associate with modulating beta subunits. Detected in superior cervical, mesenteric and coeliac ganglia. Expressed in brain (piriform cortex, olfactory tubercle, cerebral cortex, hippocampus pyramidial cells and dentate gyrus and basal ganglia of caudate/putamen and accumbens nucleus). Expressed in pituitary.

The protein localises to the membrane. The enzyme catalyses K(+)(in) = K(+)(out). Pore-forming (alpha) subunit of a voltage-gated delayed rectifier potassium channel that mediates outward-rectifying potassium currents. Elicits a slowly activating, non-inactivating and slowly deactivation outwards potassium current at depolarizating voltages from -30 mV to +50mV. Shows no obvious change in the activation rate from different holding potentials. Activation is strongly dependent on the pH of the external solution. In Rattus norvegicus (Rat), this protein is Voltage-gated delayed rectifier potassium channel KCNH8.